The sequence spans 176 residues: NAD(P)H-quinone oxidoreductase subunit J (176 aa).

It belongs to the complex I 30 kDa subunit family. As to quaternary structure, NDH-1 can be composed of about 15 different subunits; different subcomplexes with different compositions have been identified which probably have different functions.

The protein localises to the cellular thylakoid membrane. It catalyses the reaction a plastoquinone + NADH + (n+1) H(+)(in) = a plastoquinol + NAD(+) + n H(+)(out). The enzyme catalyses a plastoquinone + NADPH + (n+1) H(+)(in) = a plastoquinol + NADP(+) + n H(+)(out). Its function is as follows. NDH-1 shuttles electrons from an unknown electron donor, via FMN and iron-sulfur (Fe-S) centers, to quinones in the respiratory and/or the photosynthetic chain. The immediate electron acceptor for the enzyme in this species is believed to be plastoquinone. Couples the redox reaction to proton translocation, and thus conserves the redox energy in a proton gradient. Cyanobacterial NDH-1 also plays a role in inorganic carbon-concentration. The protein is NAD(P)H-quinone oxidoreductase subunit J of Prochlorococcus marinus (strain MIT 9515).